The following is a 570-amino-acid chain: MQGPLYIGFDLSTQQLKGLVVNSDLKVVYVSKFDFDADSRGFPIKKGVLTNEAEHEVFAPVALWLQALDGVLEGLRKQGMDFSQIKGISGAGQQHGSVYWGENAEKLLKELDASKTLEEQLDGAFSHPFSPNWQDSSTQKECDEFDAALGGQSELAFATGSKAHHRFTGPQIMRFQRKYPDVYKKTSRISLVSSFIASLFLGHIAPMDISDVCGMNLWNIKKGAYDEKLLQLCAGSSGVDDLKRKLGDVPEDGGIHLGPIDRYYVERYGFSPDCTIIPATGDNPATILALPLRASDAMVSLGTSTTFLMSTPSYKPDPATHFFNHPTTAGLYMFMLCYKNGGLARELVRDAVNEKLGEKPSTSWANFDKVTLETPPMGQKADSDPMKLGLFFPRPEIVPNLRSGQWRFDYNPKDGSLQPSNGGWDEPFDEARAIVESQMLSLRLRSRGLTQSPGEGIPAQPRRVYLVGGGSKNKAIAKVAGEILGGSEGVYKLEIGDNACALGAAYKAVWAMERAEGQTFEDLIGKRWHEEEFIEKIADGYQPGVFERYGQAVEGFEKMELEVLRQEGKH.

Residues H95, R166, D282, and N283 each coordinate substrate. ATP-binding positions include W364, 469–470 (GG), and N473.

The protein belongs to the FGGY kinase family.

Its subcellular location is the cytoplasm. It catalyses the reaction D-xylulose + ATP = D-xylulose 5-phosphate + ADP + H(+). In terms of biological role, highly specific D-xylulose kinase which participates in the catabolism of xylose. Xylose is a major component of hemicelluloses such as xylan. Most fungi utilize D-xylose via three enzymatic reactions, xylose reductase (XR), xylitol dehydrogenase (XDH), and xylulokinase, to form xylulose 5-phosphate, which enters pentose phosphate pathway. In Aspergillus niger, this protein is D-xylulose kinase A (xkiA).